The following is a 1103-amino-acid chain: PH, RCC1 and FYVE domains-containing protein 1 (1103 aa).

A PH domain is found at 22–123 (KKGTQLLKYG…IWIGGLKTLI (102 aa)). The segment at 144-233 (DASRELTSSS…SSSHGSAADD (90 aa)) is disordered. Composition is skewed to low complexity over residues 151–169 (SSSP…SSPG) and 217–231 (SVSS…GSAA). RCC1 repeat units follow at residues 237-298 (LGDV…FVTR), 299-351 (QGEI…AVTL), 353-406 (GELY…LITS), 407-458 (YGRL…AVVE), 471-522 (SGKL…GLTT), 524-574 (GQVF…ALTS), and 575-626 (RNEV…AICL). An FYVE-type zinc finger spans residues 632–694 (GAEQSQCSTC…VCDSCYVKLS (63 aa)). Residues Cys638, Cys641, Cys654, Cys657, Cys662, Cys665, Cys686, and Cys689 each contribute to the Zn(2+) site. The interval 783–818 (ATPKLAQAPSGISSRSVSPFSRRSSPPRSATPMPST) is disordered. Positions 791-818 (PSGISSRSVSPFSRRSSPPRSATPMPST) are enriched in low complexity. Positions 828 to 904 (ADNMKKTNEI…IAQLKDVAEK (77 aa)) form a coiled coil. Residues 962–979 (NLQSPKQTPRASERNSNA) are compositionally biased toward polar residues. Residues 962 to 988 (NLQSPKQTPRASERNSNAYPADPRLSS) are disordered. The 56-residue stretch at 1023-1078 (AEWIEQYEPGVYITLVALHDGTRDLRRVRFSRRRFGEHQAETWWSENREKVYEKYN) folds into the BRX domain. A disordered region spans residues 1079–1103 (VRVSEKSTASQTHRDRDEEEEDIPH).

In terms of tissue distribution, mostly expressed in flowers, and, to a lower extent, in stems, leaves, siliques, seeds.

In terms of biological role, binds to phosphatidic acid and to phosphoinositides such as PtdIns3P, PtdIns(3,4)P(2), PtdIns(3,4,5)P(3) and PtdIns(4,5)P(2). Catalyzes guanine nucleotide exchange on specific Rab proteins. In Arabidopsis thaliana (Mouse-ear cress), this protein is PH, RCC1 and FYVE domains-containing protein 1.